Consider the following 280-residue polypeptide: Late embryogenesis abundant protein 76 (280 aa).

Disordered stretches follow at residues 1 to 156 and 220 to 241; these read MASN…GEAV and EEED…TDPT. The span at 28 to 39 shows a compositional bias: basic and acidic residues; it reads MRDKAEEGKDKT. LEA 11-mer repeat repeat units lie at residues 31-41, 53-63, 75-85, 97-107, and 119-129; these read KAEEGKDKTSQ, TAQAAKDKTSQ, and TTQSSKEKTSQ. Over residues 40–114 the composition is skewed to low complexity; the sequence is SQTAQKAQQK…TSQAAQTTQQ (75 aa). Basic and acidic residues-rich tracts occupy residues 115-127 and 136-145; these read KAHE…KEKT and EKARETKDKT. The segment covering 230-239 has biased composition (low complexity); that stretch reads TTTCTTQSTD.

It belongs to the LEA type 4 family.

Its function is as follows. Lea proteins are late embryonic proteins abundant in higher plant seed embryos. The polypeptide is Late embryogenesis abundant protein 76 (Brassica napus (Rape)).